Reading from the N-terminus, the 1555-residue chain is Phospholipid-transporting ATPase DNF1 (1555 aa).

The interval 1–85 (MAPPQEEGGG…SSNNGGSAPR (85 aa)) is disordered. Residues 1–134 (MAPPQEEGGG…PKNLWFQFHN (134 aa)) are Cytoplasmic-facing. Residues 22 to 37 (WATRRLTVKSGARKRL) show a composition bias toward basic residues. A compositionally biased stretch (low complexity) spans 72–82 (GSISSSNNGGS). Residues 135–155 (IANIFFLFLVILVIFPIFGGV) traverse the membrane as a helical segment. A topological domain (extracellular) is located at residue Asn-156. Residues 157 to 177 (PGLNSVPLIVIITVTAIKDAI) traverse the membrane as a helical segment. Over 178-491 (EDYRRTILDI…ARIARELNFN (314 aa)) the chain is Cytoplasmic. A disordered region spans residues 257 to 288 (TRTAPWDPSHRRSVASHTEEIQMTPVPSPVPH). A helical transmembrane segment spans residues 492 to 512 (VICNFGILLIMCLIAAIANGI). The Extracellular segment spans residues 513–537 (AWGKTDASLAWFEYGSIGGTPALTG). Residues 538-558 (FITFWAAVIVFQNLVPISLYI) traverse the membrane as a helical segment. Topologically, residues 559 to 1123 (SLEIVRTLQA…TISNFFYKNM (565 aa)) are cytoplasmic. The active-site 4-aspartylphosphate intermediate is Asp-606. Asp-606, Lys-607, Thr-608, Glu-740, Phe-781, Ser-783, Lys-786, Lys-804, Arg-839, Thr-840, Thr-919, Gly-920, Asp-921, Arg-1031, and Lys-1037 together coordinate ATP. Asp-606 is a Mg(2+) binding site. Thr-608 provides a ligand contact to Mg(2+). Mg(2+) is bound at residue Asp-1057. Residues Asn-1060 and Asp-1061 each coordinate ATP. Asp-1061 is a Mg(2+) binding site. Residues 1124–1144 (IWTWSIFWYQCYCNFDIAYIF) form a helical membrane-spanning segment. The Extracellular portion of the chain corresponds to 1145–1146 (EY). The chain crosses the membrane as a helical span at residues 1147–1167 (TYILMFNLFFTSVPVILMGVL). Residues 1168–1200 (DQDVSDTVSLAVPQLYRRGIERKEWTQTKFWLY) lie on the Cytoplasmic side of the membrane. The helical transmembrane segment at 1201–1221 (MIDGVYQSVMSFFIPFIFVVL) threads the bilayer. The Extracellular portion of the chain corresponds to 1222-1237 (TPTAAGNGLDVSERTR). Residues 1238 to 1258 (LGAYIAHPAVITINGYILINT) form a helical membrane-spanning segment. Topologically, residues 1259 to 1262 (YRWD) are cytoplasmic. The chain crosses the membrane as a helical span at residues 1263–1283 (WLMLLSIVLSDVFIFFWTGVY). The Extracellular portion of the chain corresponds to 1284–1302 (TATTYSAGFYQAAPQVYQE). The chain crosses the membrane as a helical span at residues 1303-1323 (LTFWMCLIVTPALCLLPRLVV). Residue Arg-1320 participates in a 1,2-diacyl-sn-glycero-3-phospho-L-serine binding. Residues 1324 to 1555 (KCIQKQRFPY…EGEPPREPPM (232 aa)) are Cytoplasmic-facing. Disordered regions lie at residues 1364-1456 (VEGE…ERTR) and 1489-1555 (ESTH…EPPM). The span at 1406 to 1432 (ATHNTRAQNGSDGTTYIMQSRTSTELQ) shows a compositional bias: polar residues. Basic and acidic residues-rich tracts occupy residues 1436–1456 (PFDR…ERTR) and 1540–1555 (KSID…EPPM).

This sequence belongs to the cation transport ATPase (P-type) (TC 3.A.3) family. Type IV subfamily. In terms of assembly, component of a flippase complex consisting of DNF1 and CDC50. Interacts with CDC50; the interaction is direct. The cofactor is Mg(2+).

It localises to the cell membrane. Its subcellular location is the endosome membrane. The protein localises to the golgi apparatus. The protein resides in the trans-Golgi network membrane. The catalysed reaction is ATP + H2O + phospholipidSide 1 = ADP + phosphate + phospholipidSide 2.. The enzyme catalyses a 1,2-diacyl-sn-glycero-3-phosphoethanolamine(out) + ATP + H2O = a 1,2-diacyl-sn-glycero-3-phosphoethanolamine(in) + ADP + phosphate + H(+). It carries out the reaction a 1,2-diacyl-sn-glycero-3-phosphocholine(out) + ATP + H2O = a 1,2-diacyl-sn-glycero-3-phosphocholine(in) + ADP + phosphate + H(+). It catalyses the reaction a beta-D-glucosyl-(1&lt;-&gt;1')-N-acylsphing-4-enine(out) + ATP + H2O = a beta-D-glucosyl-(1&lt;-&gt;1')-N-acylsphing-4-enine(in) + ADP + phosphate + H(+). The catalysed reaction is a 1,2-diacyl-sn-glycero-3-phospho-L-serine(out) + ATP + H2O = a 1,2-diacyl-sn-glycero-3-phospho-L-serine(in) + ADP + phosphate + H(+). In terms of biological role, catalytic component of a P4-ATPase flippase complex which catalyzes the hydrolysis of ATP coupled to the transport of phosphatidylcholine and phosphatidylserine from the lumenal to the cytosolic leaflet of membranes and ensures the maintenance of asymmetric distribution of phospholipids. May also transport glucosylceramide and phosphatidylethanolamine. This Chaetomium thermophilum (strain DSM 1495 / CBS 144.50 / IMI 039719) (Thermochaetoides thermophila) protein is Phospholipid-transporting ATPase DNF1.